Consider the following 231-residue polypeptide: Verlamelin biosynthesis protein B (231 aa).

It functions in the pathway secondary metabolite biosynthesis. In terms of biological role, part of the gene cluster that mediates the biosynthesis of verlamelin, a lipopeptide that exhibits antifungal activity against plant pathogenic fungi. Verlamelin is a cyclic hexadepsipeptide and is bridged by ester bonding between a 5-hydroxytetradecanoic acid moiety and a carboxyl group on the terminal Val of amide-bonded tetradecanoyl-hexapeptide D-allo-Thr-D-Ala-L-Pro-L-Gln-D-Tyr-L-Val. VlmA and vlmB are altogether regarded as essential components in the biosynthesis of 5-hydroxytetradecanoic acid. VlmA catalyzes the hydroxylation at position C5 of tetradecanoic acid produced in primary metabolism, while the precise function of vlmB still remains to be solved. To be loaded onto the waiting NRPS, 5-hydroxytetradecanoic acid is activated in the form of acyladenylate by the AMP-dependent ligase vlmC. VlmS seems to accept the fatty-acyl intermediate onto the initial module to further elongate amino acid residues by the downstream modules. In addition, in the last module at its C-terminus, vlmS contains a surplus condensation (C) domain that may be involved in cyclization, the last step to form verlamelin. The polypeptide is Verlamelin biosynthesis protein B (Lecanicillium sp).